A 400-amino-acid polypeptide reads, in one-letter code: Nicotinate phosphoribosyltransferase (400 aa).

Histidine 220 carries the post-translational modification Phosphohistidine; by autocatalysis.

Belongs to the NAPRTase family. In terms of processing, transiently phosphorylated on a His residue during the reaction cycle. Phosphorylation strongly increases the affinity for substrates and increases the rate of nicotinate D-ribonucleotide production. Dephosphorylation regenerates the low-affinity form of the enzyme, leading to product release.

The catalysed reaction is nicotinate + 5-phospho-alpha-D-ribose 1-diphosphate + ATP + H2O = nicotinate beta-D-ribonucleotide + ADP + phosphate + diphosphate. It participates in cofactor biosynthesis; NAD(+) biosynthesis; nicotinate D-ribonucleotide from nicotinate: step 1/1. Its function is as follows. Catalyzes the synthesis of beta-nicotinate D-ribonucleotide from nicotinate and 5-phospho-D-ribose 1-phosphate at the expense of ATP. This Salmonella schwarzengrund (strain CVM19633) protein is Nicotinate phosphoribosyltransferase.